The sequence spans 717 residues: MGETKVIYHLDEQETPYLVKLPVPAEKVTLGDFKNILNKPNYKFFFKSMDDDFGVVKEEISDDNAKLPCFNGRVVCWLVSADGSQSDAGSVCADIQSDLPPPIERTGGIGDSRPPSFHPNTRGSQENLDNETETDSVVSARRERPGRKETSEHATRINGTSKMERRRDTGGYESSSTLMSSELDSTSFFDSDEDDSTSRFSNSTEQSSASRLMRRHKRRRRKPKAPQIERSSSFSSITDSTMSLNIITVTLNMEKYNFLGISIVGQSNERGDGGIYIGSIMKGGAVAADGRIEPGDMLLQVNDTNFENMSNDDAVRVLRDIVHKPGPITLTVAKCWDPSPRNCFTLPRSEPIRPIDPAAWVSHTAAMTGTYPAYGMSPSMSTITSTSSSITSSIPETERFDDFQLSIHSDMVTIVKAMSSSESGLEVRDRMWLKITIPNAFIGSDVVDWLYHHVEGFTDRREARKYASNLLKAGYIRHTVNKITFSEQCYYIFGDLCGNMANLSLNDHDGSSGTSDQDTLAPLPHPGAAPWPIAFQYQYPLPHPYSPHPGFPDPAYIYGGGSAGSQHSEGSRSSGSNRSSTEKRKDRETKGGDSKSGGSGSESDHTTRSSLRRDRAASERSVPASEHSHRSHHSIAHSIRSHHTHQSFGPPGIPPLYGAPMMMMPAPVSVMGPPGAPPSRDLASVPPELTASRQSFRMAMGNPSEFFVDVIKEFWGV.

The 82-residue stretch at 1–82 folds into the DIX domain; that stretch reads MGETKVIYHL…RVVCWLVSAD (82 aa). Residues 89–235 form a disordered region; sequence GSVCADIQSD…PQIERSSSFS (147 aa). Positions 118–127 are enriched in polar residues; sequence HPNTRGSQEN. Over residues 140–155 the composition is skewed to basic and acidic residues; it reads ARRERPGRKETSEHAT. Residues 173–189 show a composition bias toward low complexity; it reads ESSSTLMSSELDSTSFF. Polar residues predominate over residues 199 to 210; sequence RFSNSTEQSSAS. A compositionally biased stretch (basic residues) spans 212-224; that stretch reads LMRRHKRRRRKPK. The region spanning 248–333 is the PDZ domain; sequence TVTLNMEKYN…KPGPITLTVA (86 aa). In terms of domain architecture, DEP spans 421–495; sequence SESGLEVRDR…SEQCYYIFGD (75 aa). The interval 552-653 is disordered; sequence PDPAYIYGGG…THQSFGPPGI (102 aa). Residues 564–579 show a composition bias toward low complexity; it reads GSQHSEGSRSSGSNRS. Basic and acidic residues-rich tracts occupy residues 580-593 and 602-618; these read STEKRKDRETKGGD and ESDHTTRSSLRRDRAAS. The segment covering 629–645 has biased composition (basic residues); sequence HRSHHSIAHSIRSHHTH.

It belongs to the DSH family. Expressed throughout the epidermis.

Its subcellular location is the cytoplasm. Involved in the signal transduction pathway mediated by multiple Wnt genes. Required during ciliogenesis for the docking of basal bodies to the apical plasma membrane. The chain is Segment polarity protein dishevelled homolog DVL-3 from Xenopus laevis (African clawed frog).